The sequence spans 349 residues: Twinfilin-2 (349 aa).

At Ala-2 the chain carries N-acetylalanine. ADF-H domains follow at residues 4-139 (QTGI…KHLS) and 177-313 (GLAF…DEVH). Position 14 is an N6-acetyllysine (Lys-14). Tyr-309 carries the phosphotyrosine modification. Residues 322–349 (AFAKPKGPGGKRGHKRLIRGPGENGEDS) form a disordered region. The segment covering 330 to 339 (GGKRGHKRLI) has biased composition (basic residues). Ser-349 is modified (phosphoserine).

This sequence belongs to the actin-binding proteins ADF family. Twinfilin subfamily. Interacts with G-actin; ADP-actin form and capping protein (CP). Isoform 2 interacts (via its N-terminal ADF-H domain) with G-actin (ADP-bound form) with significantly higher affinity than isoform 1. May also be able to interact with TWF1 and phosphoinositides, PI(4,5)P2. When bound to PI(4,5)P2, it is down-regulated. Interacts with MYO7A. Phosphorylated on both serine/threonine and tyrosine. Isoform 1 is ubiquitously expressed (at protein level). Isoform 2 expression is restricted to heart and skeletal muscle where it is the predominant form.

The protein resides in the cytoplasm. It is found in the cytoskeleton. The protein localises to the perinuclear region. Its subcellular location is the cell projection. It localises to the stereocilium. In terms of biological role, actin-binding protein involved in motile and morphological processes. Inhibits actin polymerization, likely by sequestering G-actin. By capping the barbed ends of filaments, it also regulates motility. Seems to play an important role in clathrin-mediated endocytosis and distribution of endocytic organelles. May play a role in regulating the mature length of the middle and short rows of stereocilia. This chain is Twinfilin-2 (Twf2), found in Mus musculus (Mouse).